The chain runs to 179 residues: Transcription factor 21 (179 aa).

The tract at residues 20-86 (CDGIKLDPNK…KQVQRNAANA (67 aa)) is disordered. Residues 34–46 (SNDSNEESSTCDN) show a composition bias toward polar residues. A compositionally biased stretch (basic residues) spans 50–64 (KKGRGTSGKRRKASS). Residues 70-80 (GTINQEGKQVQ) show a composition bias toward polar residues. A bHLH domain is found at 79–131 (VQRNAANARERARMRVLSKAFSRLKTTLPWVPPDTKLSKLDTLRLASSYIAHL).

As to quaternary structure, efficient DNA binding requires dimerization with another bHLH protein. In terms of tissue distribution, at the start of neurulation (stage 13), expressed in the pronephros. At tailbud stage (stage 25-28), expression is high in the anterior-most branchial arch and pronephric glomus. At stage 40, staining persists in the glomus and in the epicardium region of the heart, and at stage 42, expression is higher in the glomus than in the kidney tubule or duct. In adults, expression is highest in the rectum and the spleen, with significant expression in the duodenum, heart, kidney, lungs, pancreas, skin, liver and muscle.

Its subcellular location is the nucleus. Functionally, involved in epithelial-mesenchymal interactions in kidney and lung morphogenesis that include epithelial differentiation and branching morphogenesis. This is Transcription factor 21 (tcf21) from Xenopus laevis (African clawed frog).